The primary structure comprises 154 residues: Ubiquitin-like protein 4A-A (154 aa).

One can recognise a Ubiquitin-like domain in the interval 1-76 (MILTVKPLQG…LNLVVRPAGE (76 aa)).

Component of the BAT3 complex.

It localises to the cytoplasm. Its subcellular location is the cytosol. Its function is as follows. Component of the BAT3 complex, a multiprotein complex involved in the post-translational delivery of tail-anchored (TA) membrane proteins to the endoplasmic reticulum membrane. TA membrane proteins, also named type II transmembrane proteins, contain a single C-terminal transmembrane region. This is Ubiquitin-like protein 4A-A (ubl4aa) from Salmo salar (Atlantic salmon).